The primary structure comprises 788 residues: Glucan 1,3-beta-glucosidase (788 aa).

Positions methionine 1–alanine 42 are cleaved as a signal peptide. 4 N-linked (GlcNAc...) asparagine glycosylation sites follow: asparagine 28, asparagine 233, asparagine 381, and asparagine 773.

This sequence belongs to the glycosyl hydrolase 55 family.

The enzyme catalyses Successive hydrolysis of beta-D-glucose units from the non-reducing ends of (1-&gt;3)-beta-D-glucans, releasing alpha-glucose.. The sequence is that of Glucan 1,3-beta-glucosidase (EXG1) from Cochliobolus carbonum (Maize leaf spot fungus).